The sequence spans 167 residues: Leptin (167 aa).

An N-terminal signal peptide occupies residues 1–21 (MHWGTLCGFLWLWPYLFYVQA). Cysteine 117 and cysteine 167 are disulfide-bonded.

The protein belongs to the leptin family. As to quaternary structure, interacts with SIGLEC6. In terms of tissue distribution, adipose tissue is the main source of leptin. It is also produced by other peripheral tissues such as the skeletal muscle. Expressed by intercalated and striated tracts of submandibular and parotid salivary gland intralobular ducts. Detected by fundic epithelium of the gastric mucosa. Secreted into blood and gastric juice.

Its subcellular location is the secreted. Functionally, key player in the regulation of energy balance and body weight control. Once released into the circulation, has central and peripheral effects by binding LEPR, found in many tissues, which results in the activation of several major signaling pathways. In the hypothalamus, acts as an appetite-regulating factor that induces a decrease in food intake and an increase in energy consumption by inducing anorexinogenic factors and suppressing orexigenic neuropeptides, also regulates bone mass and secretion of hypothalamo-pituitary-adrenal hormones. In the periphery, increases basal metabolism, influences reproductive function, regulates pancreatic beta-cell function and insulin secretion, is pro-angiogenic for endothelial cell and affects innate and adaptive immunity. In the arcuate nucleus of the hypothalamus, activates by depolarization POMC neurons inducing FOS and SOCS3 expression to release anorexigenic peptides and inhibits by hyperpolarization NPY neurons inducing SOCS3 with a consequent reduction on release of orexigenic peptides. In addition to its known satiety inducing effect, has a modulatory role in nutrient absorption. In the intestine, reduces glucose absorption by enterocytes by activating PKC and leading to a sequential activation of p38, PI3K and ERK signaling pathways which exerts an inhibitory effect on glucose absorption. Acts as a growth factor on certain tissues, through the activation of different signaling pathways increases expression of genes involved in cell cycle regulation such as CCND1, via JAK2-STAT3 pathway, or VEGFA, via MAPK1/3 and PI3K-AKT1 pathways. May also play an apoptotic role via JAK2-STAT3 pathway and up-regulation of BIRC5 expression. Pro-angiogenic, has mitogenic activity on vascular endothelial cells and plays a role in matrix remodeling by regulating the expression of matrix metalloproteinases (MMPs) and tissue inhibitors of metalloproteinases (TIMPs). In innate immunity, modulates the activity and function of neutrophils by increasing chemotaxis and the secretion of oxygen radicals. Increases phagocytosis by macrophages and enhances secretion of pro-inflammatory mediators. Increases cytotoxic ability of NK cells. Plays a pro-inflammatory role, in synergy with IL1B, by inducing NOS2 which promotes the production of IL6, IL8 and Prostaglandin E2, through a signaling pathway that involves JAK2, PI3K, MAP2K1/MEK1 and MAPK14/p38. In adaptive immunity, promotes the switch of memory T-cells towards T helper-1 cell immune responses. Increases CD4(+)CD25(-) T-cell proliferation and reduces autophagy during TCR (T-cell receptor) stimulation, through MTOR signaling pathway activation and BCL2 up-regulation. The protein is Leptin of Homo sapiens (Human).